The chain runs to 168 residues: G/U mismatch-specific DNA glycosylase (168 aa).

This sequence belongs to the uracil-DNA glycosylase (UDG) superfamily. TDG/mug family. Binds DNA as a monomer.

The protein resides in the cytoplasm. The enzyme catalyses Specifically hydrolyzes mismatched double-stranded DNA and polynucleotides, releasing free uracil.. In terms of biological role, excises ethenocytosine and uracil, which can arise by alkylation or deamination of cytosine, respectively, from the corresponding mispairs with guanine in ds-DNA. It is capable of hydrolyzing the carbon-nitrogen bond between the sugar-phosphate backbone of the DNA and the mispaired base. The complementary strand guanine functions in substrate recognition. Required for DNA damage lesion repair in stationary-phase cells. This is G/U mismatch-specific DNA glycosylase from Escherichia coli (strain UTI89 / UPEC).